A 161-amino-acid chain; its full sequence is Probable endopeptidase HI_1314 (161 aa).

The first 18 residues, 1–18 (MKVYKSFLIATASLFLFA), serve as a signal peptide directing secretion. C19 is lipidated: N-palmitoyl cysteine. C19 carries S-diacylglycerol cysteine lipidation. Residues 39–161 (IMAIAMLSEQ…SKAFWQVRRI (123 aa)) form the NlpC/P60 domain. C69 (nucleophile) is an active-site residue. H122 (proton acceptor) is an active-site residue. The active site involves H134.

It belongs to the peptidase C40 family.

Its subcellular location is the cell membrane. The sequence is that of Probable endopeptidase HI_1314 from Haemophilus influenzae (strain ATCC 51907 / DSM 11121 / KW20 / Rd).